The following is a 737-amino-acid chain: Polyribonucleotide nucleotidyltransferase (737 aa).

Mg(2+) is bound by residues Asp489 and Asp495. Residues 556–615 (PKIDTIKIDVDKIKIVIGKGGETIDKIIAETGVKIDIDEEGNVSIYSSDQDAINRAKEII) enclose the KH domain. Residues 625-693 (DEVYRAKVVR…EKGRIDASMK (69 aa)) form the S1 motif domain. The tract at residues 691 to 737 (SMKALLPRPPKPEHDEKGEKSERPHRPRHQKDYKPKKEFTETSKDSE) is disordered. The segment covering 700–737 (PKPEHDEKGEKSERPHRPRHQKDYKPKKEFTETSKDSE) has biased composition (basic and acidic residues).

Belongs to the polyribonucleotide nucleotidyltransferase family. Mg(2+) serves as cofactor.

It localises to the cytoplasm. It catalyses the reaction RNA(n+1) + phosphate = RNA(n) + a ribonucleoside 5'-diphosphate. Its function is as follows. Involved in mRNA degradation. Catalyzes the phosphorolysis of single-stranded polyribonucleotides processively in the 3'- to 5'-direction. The polypeptide is Polyribonucleotide nucleotidyltransferase (Streptococcus pneumoniae serotype 4 (strain ATCC BAA-334 / TIGR4)).